A 1237-amino-acid chain; its full sequence is uncharacterized protein (1237 aa).

One can recognise an MHD1 domain in the interval 591 to 712; the sequence is KDMLEIYSDL…IVLSKYTQWT (122 aa). Residues 786–906 form the C2 domain; that stretch reads LIEALDVAES…GDYLPREEWF (121 aa). An MHD2 domain is found at 1014 to 1130; that stretch reads EAAIYELLDY…KPTDFLLQEC (117 aa).

This is an uncharacterized protein from Schizosaccharomyces pombe (strain 972 / ATCC 24843) (Fission yeast).